The chain runs to 1184 residues: von Willebrand factor A domain-containing protein 3A (1184 aa).

A signal peptide spans Met1–Gly24. The disordered stretch occupies residues Gly40–Gly62. Positions Lys50–Gly62 are enriched in polar residues. A coiled-coil region spans residues Thr333–Leu357. A VWFA 1 domain is found at Arg511–Leu708. Residue Asn709 is glycosylated (N-linked (GlcNAc...) asparagine). The interval Leu729–Ser780 is disordered. Residues Ser765–Pro776 are compositionally biased toward basic and acidic residues. The 173-residue stretch at Lys959–Phe1131 folds into the VWFA 2 domain.

It localises to the secreted. This is von Willebrand factor A domain-containing protein 3A (VWA3A) from Homo sapiens (Human).